The sequence spans 245 residues: DNA repair protein RecO (245 aa).

The protein belongs to the RecO family.

Its function is as follows. Involved in DNA repair and RecF pathway recombination. In Klebsiella pneumoniae (strain 342), this protein is DNA repair protein RecO.